The chain runs to 87 residues: Small ribosomal subunit protein uS15 (87 aa).

Belongs to the universal ribosomal protein uS15 family. As to quaternary structure, part of the 30S ribosomal subunit. Forms a bridge to the 50S subunit in the 70S ribosome, contacting the 23S rRNA.

Functionally, one of the primary rRNA binding proteins, it binds directly to 16S rRNA where it helps nucleate assembly of the platform of the 30S subunit by binding and bridging several RNA helices of the 16S rRNA. Forms an intersubunit bridge (bridge B4) with the 23S rRNA of the 50S subunit in the ribosome. The polypeptide is Small ribosomal subunit protein uS15 (Dehalococcoides mccartyi (strain ATCC BAA-2100 / JCM 16839 / KCTC 5957 / BAV1)).